Consider the following 268-residue polypeptide: Interleukin-1 beta (268 aa).

A propeptide spanning residues 1-116 (MATVPELNCE…WDDDDLLVCD (116 aa)) is cleaved from the precursor.

This sequence belongs to the IL-1 family. In terms of assembly, monomer. In its precursor form, weakly interacts with full-length MEFV; the mature cytokine does not interact at all. Interacts with integrins ITGAV:ITGBV and ITGA5:ITGB1; integrin-binding is required for IL1B signaling. Interacts with cargo receptor TMED10; the interaction is direct and is required for the secretion of IL1B mature form. Interacts with HSP90AB1; the interaction facilitates cargo translocation into the ERGIC. Interacts with HSP90B1; the interaction facilitates cargo translocation into the ERGIC.

Its subcellular location is the cytoplasm. The protein localises to the cytosol. It is found in the secreted. It localises to the lysosome. The protein resides in the extracellular exosome. Its function is as follows. Potent pro-inflammatory cytokine. Initially discovered as the major endogenous pyrogen, induces prostaglandin synthesis, neutrophil influx and activation, T-cell activation and cytokine production, B-cell activation and antibody production, and fibroblast proliferation and collagen production. Promotes Th17 differentiation of T-cells. Synergizes with IL12/interleukin-12 to induce IFNG synthesis from T-helper 1 (Th1) cells. Plays a role in angiogenesis by inducing VEGF production synergistically with TNF and IL6. Involved in transduction of inflammation downstream of pyroptosis: its mature form is specifically released in the extracellular milieu by passing through the gasdermin-D (GSDMD) pore. The protein is Interleukin-1 beta of Rattus norvegicus (Rat).